A 127-amino-acid polypeptide reads, in one-letter code: Fatty acid-binding protein, liver-type (127 aa).

It belongs to the calycin superfamily. Fatty-acid binding protein (FABP) family.

It is found in the cytoplasm. The chain is Fatty acid-binding protein, liver-type (fabp1) from Epinephelus coioides (Orange-spotted grouper).